The sequence spans 292 residues: Bifunctional protein FolD (292 aa).

NADP(+)-binding positions include 171–173 (GAS), Ile-196, and Ile-237.

Belongs to the tetrahydrofolate dehydrogenase/cyclohydrolase family. Homodimer.

It catalyses the reaction (6R)-5,10-methylene-5,6,7,8-tetrahydrofolate + NADP(+) = (6R)-5,10-methenyltetrahydrofolate + NADPH. It carries out the reaction (6R)-5,10-methenyltetrahydrofolate + H2O = (6R)-10-formyltetrahydrofolate + H(+). Its pathway is one-carbon metabolism; tetrahydrofolate interconversion. In terms of biological role, catalyzes the oxidation of 5,10-methylenetetrahydrofolate to 5,10-methenyltetrahydrofolate and then the hydrolysis of 5,10-methenyltetrahydrofolate to 10-formyltetrahydrofolate. This is Bifunctional protein FolD from Helicobacter acinonychis (strain Sheeba).